Reading from the N-terminus, the 307-residue chain is Dof zinc finger protein DOF5.4 (307 aa).

A Dof-type zinc finger spans residues 51–105; sequence LKCPRCNSLNTKFCYYNNYNLSQPRHFCKNCRRYWTKGGVLRNVPVGGGCRKAKR. Zn(2+) contacts are provided by C53, C56, C78, and C81. The disordered stretch occupies residues 96–147; the sequence is VGGGCRKAKRSKTKQVPSSSSADKPTTTQDDHHVEEKSSTGSHSSSESSSLT. Over residues 109–123 the composition is skewed to polar residues; that stretch reads KQVPSSSSADKPTTT. Residues 124–133 are compositionally biased toward basic and acidic residues; sequence QDDHHVEEKS. The span at 134 to 147 shows a compositional bias: low complexity; the sequence is STGSHSSSESSSLT.

The protein resides in the nucleus. In terms of biological role, transcription factor that binds specifically to a 5'-AA[AG]G-3' consensus core sequence. Enhances the DNA binding of OBF transcription factors to OCS elements. The chain is Dof zinc finger protein DOF5.4 (DOF5.4) from Arabidopsis thaliana (Mouse-ear cress).